Consider the following 394-residue polypeptide: MAAETFLFTSESVNEGHPDKLCDQVSDAVLDACLAQDPDSKVACETCTKTNMVMVFGEITTKATVDYEKIVRDTCRGIGFVSDDVGLDADRCKVLVNIEQQSPDIAQGVHGHFTKRPEEIGAGDQGHMFGYATDETPELMPLSHVLATKLGARLTEVRKNGTCAWLRPDGKTQVTVEYLNDAGAMVPVRVHTVLISTQHDETVTNDEIAADLKEHVIKPVIPDKYLDEKTIFHLNPSGRFVIGGPHGDAGLTGRKIIIDTYGGWGAHGGGAFSGKDPTKVDRSGAYIARQAAKSIVASGLARRCIVQVSYAIGVPEPLSVFVDSYGTGKIPDKEILKIVKENFDFRPGMMTINLDLKRGGNRFIKTAAYGHFGREDPDFTWEVVKPLKYEKASS.

A Mg(2+)-binding site is contributed by glutamate 11. Residue histidine 17 coordinates ATP. K(+) is bound at residue glutamate 45. Residues glutamate 58 and glutamine 101 each coordinate L-methionine. Residues 169–171 (DGK), 237–240 (SGRF), aspartate 248, 254–255 (RK), alanine 271, lysine 275, and lysine 279 each bind ATP. Aspartate 248 lines the L-methionine pocket. Lysine 279 contacts L-methionine.

The protein belongs to the AdoMet synthase family. As to quaternary structure, homotetramer. Requires Mn(2+) as cofactor. Mg(2+) is required as a cofactor. The cofactor is Co(2+). K(+) serves as cofactor.

The protein localises to the cytoplasm. It catalyses the reaction L-methionine + ATP + H2O = S-adenosyl-L-methionine + phosphate + diphosphate. It functions in the pathway amino-acid biosynthesis; S-adenosyl-L-methionine biosynthesis; S-adenosyl-L-methionine from L-methionine: step 1/1. In terms of biological role, catalyzes the formation of S-adenosylmethionine from methionine and ATP. The reaction comprises two steps that are both catalyzed by the same enzyme: formation of S-adenosylmethionine (AdoMet) and triphosphate, and subsequent hydrolysis of the triphosphate. The chain is S-adenosylmethionine synthase 2 (SAM2) from Oryza sativa subsp. japonica (Rice).